The sequence spans 159 residues: Large ribosomal subunit protein uL15 (159 aa).

Residues 1 to 39 (MKLNELSPADGSTKKRMRVGRGVGSGKGKTAGRGVKGQN) form a disordered region. The span at 21–35 (RGVGSGKGKTAGRGV) shows a compositional bias: gly residues.

The protein belongs to the universal ribosomal protein uL15 family. Part of the 50S ribosomal subunit.

In terms of biological role, binds to the 23S rRNA. The protein is Large ribosomal subunit protein uL15 of Hyphomonas neptunium (strain ATCC 15444).